A 1624-amino-acid polypeptide reads, in one-letter code: ATP-binding cassette sub-family A member 6 (1624 aa).

A helical transmembrane segment spans residues 31–51 (LLEWSIPIIIGLHMGLFSYLA). N84 and N91 each carry an N-linked (GlcNAc...) asparagine glycan. A run of 6 helical transmembrane segments spans residues 222–242 (IFIL…SSNV), 267–287 (WGLI…IIIT), 297–317 (FLVI…VTFL), 326–346 (VLTN…GFTV), 356–376 (EWVL…KVIF), and 395–415 (VMIA…VLAL). Residues 478–713 (IRIRNIKKEY…WGLGYHLSLF (236 aa)) enclose the ABC transporter 1 domain. 514–521 (GHSGAGKS) serves as a coordination point for ATP. N576 carries N-linked (GlcNAc...) asparagine glycosylation. 8 helical membrane-spanning segments follow: residues 854–874 (AFLI…IEYV), 971–991 (LHCF…MLNH), 1005–1025 (FIVL…CVIC), 1058–1078 (WCGQ…TSYF), 1094–1114 (IVFS…FLTY), 1130–1150 (WSIC…NGPF), 1154–1174 (LVIS…LVVL), and 1194–1214 (AVDL…IFVL). In terms of domain architecture, ABC transporter 2 spans 1282–1520 (LHKEYAGQKK…FGQDYVLELR (239 aa)). Position 1320-1327 (1320-1327 (GPDGAGKS)) interacts with ATP.

It belongs to the ABC transporter superfamily. ABCA family. In terms of tissue distribution, widely expressed with higher expression in heart, lung, brain, spleen and testis.

Its subcellular location is the golgi apparatus membrane. Probable transporter which may play a role in macrophage lipid transport and homeostasis. The protein is ATP-binding cassette sub-family A member 6 (Abca6) of Mus musculus (Mouse).